Reading from the N-terminus, the 25-residue chain is Bioremediase (25 aa).

The region spanning 1–25 (DFPIANGERQSPVDIDTKAVVQDPA) is the Alpha-carbonic anhydrase domain. Residues 1–25 (DFPIANGERQSPVDIDTKAVVQDPA) are disordered.

The protein belongs to the alpha-carbonic anhydrase family. It depends on Zn(2+) as a cofactor.

In terms of biological role, releases silica from silica-rich substances. The sequence is that of Bioremediase from Thermoanaerobacter sp.